Reading from the N-terminus, the 921-residue chain is MDFKETLLMPKTDFPMRGNLPNREPQMQEEWKDMNIYEKVQARTKGRPLFVLHDGPPYANGDIHMGHALNKVLKDMIVRYKSMAGFHAPYVPGWDTHGLPIEQALTKSGVDRKSMSVAEFRKLCEEFARKQIDRQREQFMRLGVRGDWWNPYVTLDKGFEAQQVKVFGEMAKKGYIYKGKKPVYWSPSSESALAEAEIEYHDKRSPSIYVAFPVKDGKNVLQQDEKIVIWTTTPWTIPANLGIAVHPELEYSVVAVKGEKYVVASGLVETLESALEWENPEILRTIKGVDLEYVVAEHPIYGRDSLVVLGDHVTLDAGTGCVHTAPGHGEEDYIVGQKYGLDVLCPVDDKGYMTAEAPGFEGLFYDEANKPITQKLDECGALLKLTFITHSYAHDWRTKKPVIYRATAQWFASIENFRDELLRAIQEVKWVPEWGETRLYNMVRDRGDWCISRQRVWGVPIPIFYGENGEPIITDETINHVSELFRKHGSNVWFEWETKDLLPEGFTHESSPNGQFTREMDIMDVWFDSGSSHQGVLVEREELDRPADLYLEGSDQYRGWFNSSLSTSVAITGKAPYKGVLSHGFTLDGEGKKMSKSLGNVVIPNDVMKQLGADILRLWVASVDYQADVRVSDKILKQVSEVYRKIRNTYRFLLGNLHDFHPATHRVAIDQLNGLDRYMLAKLNDVINRVKKAYDEYQFSTVYHELHNFCTIELSSFYMDIAKDTLYVKHADHPDRRATQTVMYDVLVALAKLLSPIIPHTADEVWKHIPGVEEESVQLTDMPEPIELGDVSELKQKWDAFINVRDDVLKALENARNEKVIGKSLTAAITLYADGDVRQLLEELGPLDKLFIVSAVKVAGSVADAPKEAESYDDLAIVVEKAVGETCERCWVVSPTVGTNNEHPTLCADCAETVATYYVTK.

The 'HIGH' region signature appears at 57–67; it reads PYANGDIHMGH. Residue E552 coordinates L-isoleucyl-5'-AMP. Residues 593 to 597 carry the 'KMSKS' region motif; sequence KMSKS. K596 is a binding site for ATP. 4 residues coordinate Zn(2+): C887, C890, C907, and C910.

It belongs to the class-I aminoacyl-tRNA synthetase family. IleS type 1 subfamily. As to quaternary structure, monomer. Zn(2+) is required as a cofactor.

The protein localises to the cytoplasm. It carries out the reaction tRNA(Ile) + L-isoleucine + ATP = L-isoleucyl-tRNA(Ile) + AMP + diphosphate. Its function is as follows. Catalyzes the attachment of isoleucine to tRNA(Ile). As IleRS can inadvertently accommodate and process structurally similar amino acids such as valine, to avoid such errors it has two additional distinct tRNA(Ile)-dependent editing activities. One activity is designated as 'pretransfer' editing and involves the hydrolysis of activated Val-AMP. The other activity is designated 'posttransfer' editing and involves deacylation of mischarged Val-tRNA(Ile). The sequence is that of Isoleucine--tRNA ligase from Halalkalibacterium halodurans (strain ATCC BAA-125 / DSM 18197 / FERM 7344 / JCM 9153 / C-125) (Bacillus halodurans).